The following is a 1052-amino-acid chain: Calmin (1052 aa).

Residues M1 to E288 are actin-binding. Residues N32–Q139 form the Calponin-homology (CH) 1 domain. Residues S148–S168 show a composition bias toward low complexity. A disordered region spans residues S148–S178. The region spanning R187 to P291 is the Calponin-homology (CH) 2 domain. Disordered stretches follow at residues S391 to L420, K455 to A545, S585 to L727, and G758 to I929. 2 stretches are compositionally biased toward basic and acidic residues: residues K455–G465 and V472–P495. Residues A509–G529 show a composition bias toward polar residues. A Phosphoserine modification is found at S537. 3 stretches are compositionally biased toward basic and acidic residues: residues P594–P614, P622–G651, and P659–K669. S679 carries the phosphoserine modification. Phosphothreonine is present on T710. The span at L711 to D720 shows a compositional bias: basic and acidic residues. At S724 the chain carries Phosphoserine. Residues E759 to D773 show a composition bias toward basic and acidic residues. A compositionally biased stretch (acidic residues) spans R780–A791. The segment covering Q792–S801 has biased composition (low complexity). Over residues S836–G849 the composition is skewed to basic and acidic residues. S856 carries the post-translational modification Phosphoserine. The span at S880–M889 shows a compositional bias: basic residues. Residue S925 is modified to Phosphoserine. Residues V1027–L1047 form a helical; Anchor for type IV membrane protein membrane-spanning segment.

Expressed in testis. Expressed during testis maturation process and in maturing spermatids. In brain, it is expressed in neurons of the hippocampus, cerebral cortex, and thalamus, Purkinje cells, and also in the choroid plexus and ependymal cells. Expressed predominantly in dendrites and cell bodies of the neurons, but not in axons. The level of expression increases during the period of maturation of the mouse brain after birth.

The protein localises to the membrane. Its subcellular location is the cytoplasm. The polypeptide is Calmin (Clmn) (Mus musculus (Mouse)).